A 184-amino-acid polypeptide reads, in one-letter code: ATP synthase subunit b, chloroplastic (184 aa).

The helical transmembrane segment at 27-49 threads the bilayer; sequence LATNPINLSVVLGVLIFFGKGVL.

Belongs to the ATPase B chain family. F-type ATPases have 2 components, F(1) - the catalytic core - and F(0) - the membrane proton channel. F(1) has five subunits: alpha(3), beta(3), gamma(1), delta(1), epsilon(1). F(0) has four main subunits: a(1), b(1), b'(1) and c(10-14). The alpha and beta chains form an alternating ring which encloses part of the gamma chain. F(1) is attached to F(0) by a central stalk formed by the gamma and epsilon chains, while a peripheral stalk is formed by the delta, b and b' chains.

The protein localises to the plastid. It localises to the chloroplast thylakoid membrane. Its function is as follows. F(1)F(0) ATP synthase produces ATP from ADP in the presence of a proton or sodium gradient. F-type ATPases consist of two structural domains, F(1) containing the extramembraneous catalytic core and F(0) containing the membrane proton channel, linked together by a central stalk and a peripheral stalk. During catalysis, ATP synthesis in the catalytic domain of F(1) is coupled via a rotary mechanism of the central stalk subunits to proton translocation. Functionally, component of the F(0) channel, it forms part of the peripheral stalk, linking F(1) to F(0). The polypeptide is ATP synthase subunit b, chloroplastic (Morus indica (Mulberry)).